Here is a 562-residue protein sequence, read N- to C-terminus: Potassium-transporting ATPase potassium-binding subunit (562 aa).

12 consecutive transmembrane segments (helical) span residues 6–26, 62–82, 132–152, 175–195, 253–273, 283–303, 327–347, 356–376, 379–399, 416–436, 483–503, and 524–544; these read FLLIASFMLVLFVLSRPLGGF, YALAILCFNLLGIVLLFVLLM, GLTVQNFLSAATGIAVAFALI, LYVLLPIALIIALIFVSQGVL, FVQMLAIFLIPCALCFAFGQV, LIWAMSLIFIVAVVVVMYAEL, FGILATSLYAVVTTAASCGAV, ALGGMIPLWLMQIGEVVFGGV, GLYGMLLFVLLTVFIAGLMIG, MTALAILVTPTIVLLGTALAL, LLLAAAMFIGRFGVILPVLAI, and GLLFIGLLIGTVLLVGALTFI.

Belongs to the KdpA family. The system is composed of three essential subunits: KdpA, KdpB and KdpC.

It is found in the cell inner membrane. Functionally, part of the high-affinity ATP-driven potassium transport (or Kdp) system, which catalyzes the hydrolysis of ATP coupled with the electrogenic transport of potassium into the cytoplasm. This subunit binds the periplasmic potassium ions and delivers the ions to the membrane domain of KdpB through an intramembrane tunnel. The chain is Potassium-transporting ATPase potassium-binding subunit from Yersinia pestis bv. Antiqua (strain Antiqua).